The chain runs to 173 residues: NADH-quinone oxidoreductase subunit B (173 aa).

Cysteine 52, cysteine 53, cysteine 117, and cysteine 147 together coordinate [4Fe-4S] cluster.

The protein belongs to the complex I 20 kDa subunit family. In terms of assembly, NDH-1 is composed of 14 different subunits. Subunits NuoB, C, D, E, F, and G constitute the peripheral sector of the complex. [4Fe-4S] cluster serves as cofactor.

The protein resides in the cell inner membrane. The catalysed reaction is a quinone + NADH + 5 H(+)(in) = a quinol + NAD(+) + 4 H(+)(out). NDH-1 shuttles electrons from NADH, via FMN and iron-sulfur (Fe-S) centers, to quinones in the respiratory chain. Couples the redox reaction to proton translocation (for every two electrons transferred, four hydrogen ions are translocated across the cytoplasmic membrane), and thus conserves the redox energy in a proton gradient. The polypeptide is NADH-quinone oxidoreductase subunit B (Pelagibacter ubique (strain HTCC1062)).